Consider the following 282-residue polypeptide: Undecaprenyl-diphosphatase (282 aa).

Transmembrane regions (helical) follow at residues 40–60, 89–109, 113–133, 150–170, 196–216, 230–250, and 258–278; these read GAAFTAIVQIGTLAAVLIYFM, WMIAAGTIPIVVFGLAFKDDI, LRSLYWVSAALIALALVLSIA, ISEITWLDAMIIGFAQAMALI, FSFLLSLPSVFAAGIYQLYKT, IAVATVFAFIFGYLSIAFLLT, and GIFIGYRLLLGISLIIMIGTG.

It belongs to the UppP family.

Its subcellular location is the cell inner membrane. The catalysed reaction is di-trans,octa-cis-undecaprenyl diphosphate + H2O = di-trans,octa-cis-undecaprenyl phosphate + phosphate + H(+). Catalyzes the dephosphorylation of undecaprenyl diphosphate (UPP). Confers resistance to bacitracin. The sequence is that of Undecaprenyl-diphosphatase from Chlorobaculum parvum (strain DSM 263 / NCIMB 8327) (Chlorobium vibrioforme subsp. thiosulfatophilum).